Here is a 166-residue protein sequence, read N- to C-terminus: Large ribosomal subunit protein bL9 (166 aa).

It belongs to the bacterial ribosomal protein bL9 family.

Functionally, binds to the 23S rRNA. The sequence is that of Large ribosomal subunit protein bL9 from Borrelia garinii subsp. bavariensis (strain ATCC BAA-2496 / DSM 23469 / PBi) (Borreliella bavariensis).